A 662-amino-acid polypeptide reads, in one-letter code: Transketolase (662 aa).

His-28 is a substrate binding site. Thiamine diphosphate-binding positions include His-68 and 115–117; that span reads GPL. Asp-156 lines the Mg(2+) pocket. 2 residues coordinate thiamine diphosphate: Gly-157 and Asn-186. Mg(2+)-binding residues include Asn-186 and Ile-188. Substrate-binding residues include His-261, Arg-356, and Ser-383. Thiamine diphosphate is bound at residue His-261. Glu-410 acts as the Proton donor in catalysis. Phe-436 contributes to the thiamine diphosphate binding site. Positions 460, 468, and 519 each coordinate substrate.

It belongs to the transketolase family. As to quaternary structure, homodimer. The cofactor is Mg(2+). Ca(2+) is required as a cofactor. It depends on Mn(2+) as a cofactor. Co(2+) serves as cofactor. Requires thiamine diphosphate as cofactor.

It catalyses the reaction D-sedoheptulose 7-phosphate + D-glyceraldehyde 3-phosphate = aldehydo-D-ribose 5-phosphate + D-xylulose 5-phosphate. It functions in the pathway carbohydrate biosynthesis; Calvin cycle. The protein operates within carbohydrate degradation; pentose phosphate pathway. Functionally, catalyzes the transfer of a two-carbon ketol group from a ketose donor to an aldose acceptor, via a covalent intermediate with the cofactor thiamine pyrophosphate. This chain is Transketolase (tkt), found in Staphylococcus aureus (strain MRSA252).